Here is a 187-residue protein sequence, read N- to C-terminus: Oligoribonuclease (187 aa).

In terms of domain architecture, Exonuclease spans 7 to 170 (LCWLDMEMTG…DDILESIEEM (164 aa)). Tyr-128 is an active-site residue.

The protein belongs to the oligoribonuclease family.

Its subcellular location is the cytoplasm. Functionally, 3'-to-5' exoribonuclease specific for small oligoribonucleotides. In Neisseria meningitidis serogroup B (strain ATCC BAA-335 / MC58), this protein is Oligoribonuclease.